The chain runs to 429 residues: Endoglucanase A (429 aa).

The first 34 residues, 1–34, serve as a signal peptide directing secretion; that stretch reads MVSKKQKFLTVILVIVLAIVIVGGVFGISFVKGR. The span at 46 to 94 shows a compositional bias: basic and acidic residues; it reads AKTEQVKEPAKEEPKLVIKEKKQDESAKKEQELKKAKEEAEAAVEKETE. The disordered stretch occupies residues 46–100; it reads AKTEQVKEPAKEEPKLVIKEKKQDESAKKEQELKKAKEEAEAAVEKETEKTEEEP. Glutamate 249 serves as the catalytic Proton donor. Glutamate 334 functions as the Nucleophile in the catalytic mechanism.

Belongs to the glycosyl hydrolase 5 (cellulase A) family.

The enzyme catalyses Endohydrolysis of (1-&gt;4)-beta-D-glucosidic linkages in cellulose, lichenin and cereal beta-D-glucans.. In Butyrivibrio fibrisolvens, this protein is Endoglucanase A (celA).